The following is a 257-amino-acid chain: MSINDKPIGFFDSGVGGISVLKEAFKLLPKEDFLYYGDSKNTPYGTKKVEEVKALTFNATDFLMSKGIKALVVACNTATSVTINDLRENYDIPIIGIEPALKPAVELKKGGKIIIMATPMTLAEKKFANLMDLYKETEDIEPLPCPGLPELIEQGIVSGDVIYNYLKDKFSKYDDEKISSIVLGCTHYPFVEETLKEVTHNKACIIDGSFGTSRELKRQLKNSNMLREENRVGKVTIFNSREDKDIIDLSYKLFNMK.

Substrate contacts are provided by residues 12–13 (DS) and 44–45 (YG). The active-site Proton donor/acceptor is Cys75. 76-77 (NT) is a substrate binding site. The active-site Proton donor/acceptor is Cys185. 186–187 (TH) is a binding site for substrate.

It belongs to the aspartate/glutamate racemases family.

The enzyme catalyses L-glutamate = D-glutamate. Its pathway is cell wall biogenesis; peptidoglycan biosynthesis. Functionally, provides the (R)-glutamate required for cell wall biosynthesis. This is Glutamate racemase from Clostridium botulinum (strain 657 / Type Ba4).